The primary structure comprises 324 residues: Acetyl-coenzyme A carboxylase carboxyl transferase subunit alpha (324 aa).

A CoA carboxyltransferase C-terminal domain is found at 37-291; sequence KLDKRLDRLK…QEYVLQEWVK (255 aa).

Belongs to the AccA family. In terms of assembly, acetyl-CoA carboxylase is a heterohexamer composed of biotin carboxyl carrier protein (AccB), biotin carboxylase (AccC) and two subunits each of ACCase subunit alpha (AccA) and ACCase subunit beta (AccD).

It localises to the cytoplasm. The catalysed reaction is N(6)-carboxybiotinyl-L-lysyl-[protein] + acetyl-CoA = N(6)-biotinyl-L-lysyl-[protein] + malonyl-CoA. It functions in the pathway lipid metabolism; malonyl-CoA biosynthesis; malonyl-CoA from acetyl-CoA: step 1/1. Functionally, component of the acetyl coenzyme A carboxylase (ACC) complex. First, biotin carboxylase catalyzes the carboxylation of biotin on its carrier protein (BCCP) and then the CO(2) group is transferred by the carboxyltransferase to acetyl-CoA to form malonyl-CoA. This Chlamydia trachomatis serovar L2 (strain ATCC VR-902B / DSM 19102 / 434/Bu) protein is Acetyl-coenzyme A carboxylase carboxyl transferase subunit alpha.